Consider the following 529-residue polypeptide: Putative UPF0481 protein At3g02645 (529 aa).

N-linked (GlcNAc...) asparagine glycosylation is found at Asn-365 and Asn-403. Residues 498–518 (ILAFLAAVLLLMLVSLQLFSL) form a helical membrane-spanning segment.

It belongs to the UPF0481 family.

The protein resides in the membrane. In Arabidopsis thaliana (Mouse-ear cress), this protein is Putative UPF0481 protein At3g02645.